Reading from the N-terminus, the 537-residue chain is Putative cysteine ligase BshC (537 aa).

The protein belongs to the BshC family.

Its function is as follows. Involved in bacillithiol (BSH) biosynthesis. May catalyze the last step of the pathway, the addition of cysteine to glucosamine malate (GlcN-Mal) to generate BSH. The polypeptide is Putative cysteine ligase BshC (Staphylococcus saprophyticus subsp. saprophyticus (strain ATCC 15305 / DSM 20229 / NCIMB 8711 / NCTC 7292 / S-41)).